The sequence spans 383 residues: Succinyl-diaminopimelate desuccinylase (383 aa).

Residue His74 participates in Zn(2+) binding. The active site involves Asp76. A Zn(2+)-binding site is contributed by Asp107. Glu141 acts as the Proton acceptor in catalysis. The Zn(2+) site is built by Glu142, Glu170, and His356.

Belongs to the peptidase M20A family. DapE subfamily. In terms of assembly, homodimer. It depends on Zn(2+) as a cofactor. Co(2+) serves as cofactor.

The enzyme catalyses N-succinyl-(2S,6S)-2,6-diaminopimelate + H2O = (2S,6S)-2,6-diaminopimelate + succinate. Its pathway is amino-acid biosynthesis; L-lysine biosynthesis via DAP pathway; LL-2,6-diaminopimelate from (S)-tetrahydrodipicolinate (succinylase route): step 3/3. Functionally, catalyzes the hydrolysis of N-succinyl-L,L-diaminopimelic acid (SDAP), forming succinate and LL-2,6-diaminopimelate (DAP), an intermediate involved in the bacterial biosynthesis of lysine and meso-diaminopimelic acid, an essential component of bacterial cell walls. The polypeptide is Succinyl-diaminopimelate desuccinylase (Cupriavidus taiwanensis (strain DSM 17343 / BCRC 17206 / CCUG 44338 / CIP 107171 / LMG 19424 / R1) (Ralstonia taiwanensis (strain LMG 19424))).